We begin with the raw amino-acid sequence, 209 residues long: Probable calcium-binding protein CML36 (209 aa).

A disordered region spans residues 22-59 (SKSPTAFSFGSASSSSGQDCKNSGGDGGGGSVTPTSIL). A compositionally biased stretch (low complexity) spans 27 to 38 (AFSFGSASSSSG). EF-hand domains are found at residues 66-101 (YSYVEILQAFKLIDRDNDGAVSRHDLESLLSRLGPD), 103-138 (LTEEEINVMLKEVDCDGDGTIRLEELASRVVSLDPA), 139-174 (RDSTELKETFEFFDADRDGLISADELLRVFSTIGDE), and 176-209 (CTLDDCKRMIADVDEDGDGFVCFTEFSRMMDLQR). 4 residues coordinate Ca(2+): Asp79, Asp81, Asp83, and Asp90. Ca(2+) is bound by residues Asp152, Asp154, Asp156, Glu163, Asp189, Asp191, Asp193, and Glu200.

Its function is as follows. Potential calcium sensor. The protein is Probable calcium-binding protein CML36 (CML36) of Arabidopsis thaliana (Mouse-ear cress).